Consider the following 282-residue polypeptide: Probable phosphatase C1620.13 (282 aa).

Histidine 61 functions as the Tele-phosphohistidine intermediate in the catalytic mechanism. The Proton donor/acceptor role is filled by glutamate 135.

The protein belongs to the phosphoglycerate mutase family. BPG-dependent PGAM subfamily.

It is found in the nucleus. The sequence is that of Probable phosphatase C1620.13 from Schizosaccharomyces pombe (strain 972 / ATCC 24843) (Fission yeast).